The following is a 142-amino-acid chain: Large ribosomal subunit protein uL11 (142 aa).

It belongs to the universal ribosomal protein uL11 family. Part of the ribosomal stalk of the 50S ribosomal subunit. Interacts with L10 and the large rRNA to form the base of the stalk. L10 forms an elongated spine to which L12 dimers bind in a sequential fashion forming a multimeric L10(L12)X complex. In terms of processing, one or more lysine residues are methylated.

Its function is as follows. Forms part of the ribosomal stalk which helps the ribosome interact with GTP-bound translation factors. This Shewanella frigidimarina (strain NCIMB 400) protein is Large ribosomal subunit protein uL11.